Here is a 299-residue protein sequence, read N- to C-terminus: Probable alpha-L-glutamate ligase (299 aa).

The ATP-grasp domain maps to 112-294 (LQLLTEQGIA…IALQMIVHIE (183 aa)). ATP is bound by residues Lys-148, 185-186 (DF), Asp-194, and 218-220 (RAN). Residues Asp-255, Glu-267, and Asn-269 each coordinate Mg(2+). Residues Asp-255, Glu-267, and Asn-269 each coordinate Mn(2+).

It belongs to the RimK family. Mg(2+) is required as a cofactor. The cofactor is Mn(2+).

This chain is Probable alpha-L-glutamate ligase, found in Histophilus somni (strain 2336) (Haemophilus somnus).